A 361-amino-acid polypeptide reads, in one-letter code: MSVPFDPASYDRQLEEKTVRLRELLAPFDAPEPQVFDSPREHYRLRAEFRLWREDQKRYYAMFAPGDNRTPILLEGLPIASERINALMPVLRERWEASPTLNHKLFQVDFLTTLAGDAMITMCYHRPLDAEWQAAAEQLAAELNVSLIGRSKGQKLIIGQDYVTEKLDVAGRTFSYRQPEGAFTQPNGTVNGKMLNWAFDALGERQDDLLELYCGNGNFTLPLATRVRKVLATEISKTSVNAALSNLDDNGVDNVTLVRLSAEELTEALNEVRPFRRLHGVDLKSYDFGSVFVDPPRAGMDPDTCELTRRFERILYISCNPETLAANIAQLHDTHRVERCALFDQFPYTHHMESGVLLVRR.

S-adenosyl-L-methionine-binding residues include Gln185, Tyr213, Asn218, Glu234, and Asp294. Catalysis depends on Cys319, which acts as the Nucleophile. The Proton acceptor role is filled by Glu353.

The protein belongs to the class I-like SAM-binding methyltransferase superfamily. RNA M5U methyltransferase family. TrmA subfamily.

The enzyme catalyses uridine(54) in tRNA + S-adenosyl-L-methionine = 5-methyluridine(54) in tRNA + S-adenosyl-L-homocysteine + H(+). It carries out the reaction uridine(341) in tmRNA + S-adenosyl-L-methionine = 5-methyluridine(341) in tmRNA + S-adenosyl-L-homocysteine + H(+). Its function is as follows. Dual-specificity methyltransferase that catalyzes the formation of 5-methyluridine at position 54 (m5U54) in all tRNAs, and that of position 341 (m5U341) in tmRNA (transfer-mRNA). This chain is tRNA/tmRNA (uracil-C(5))-methyltransferase, found in Pseudomonas savastanoi pv. phaseolicola (strain 1448A / Race 6) (Pseudomonas syringae pv. phaseolicola (strain 1448A / Race 6)).